The following is a 201-amino-acid chain: Dynactin subunit 6 (201 aa).

Belongs to the dynactin subunits 5/6 family. Dynactin subunit 6 subfamily. As to quaternary structure, member of the pointed-end complex of the dynactin shoulder complex which contains dctn4, dctn5 and dctn6 subunits and Actr10. Within the complex dctn6 forms a heterodimer with dctn5. Interacts with plk1.

It is found in the cytoplasm. The protein localises to the cytoskeleton. Its subcellular location is the chromosome. It localises to the centromere. The protein resides in the kinetochore. Part of the dynactin complex that activates the molecular motor dynein for ultra-processive transport along microtubules. This chain is Dynactin subunit 6 (dctn6), found in Xenopus tropicalis (Western clawed frog).